The sequence spans 184 residues: uncharacterized protein (184 aa).

A helical transmembrane segment spans residues 35–55 (LSFLIYILYTFSISGLSTFVI).

The protein resides in the membrane. This is an uncharacterized protein from Schizosaccharomyces pombe (strain 972 / ATCC 24843) (Fission yeast).